Here is a 409-residue protein sequence, read N- to C-terminus: Casein kinase I isoform delta-B (409 aa).

The Protein kinase domain occupies 9-277 (YRLGRKIGSG…YLRQLFRNLF (269 aa)). Residues 15–23 (IGSGSFGDI) and lysine 38 each bind ATP. The active-site Proton acceptor is the aspartate 128. Residues 300–315 (TAEEADRERRERDERM) are compositionally biased toward basic and acidic residues. Residues 300–409 (TAEEADRERR…NSIPFDHHGK (110 aa)) are disordered. An autoinhibitory region spans residues 317–341 (HSRNPAARGIPAASGRPRPTQDGAP). 2 stretches are compositionally biased toward polar residues: residues 346–358 (TPTS…SSPR) and 380–402 (NVSS…QNSI).

It belongs to the protein kinase superfamily. Monomer. Interacts with per1 and per2. Component of the circadian core oscillator. In terms of processing, autophosphorylated on serine and threonine residues.

The protein localises to the cytoplasm. It localises to the nucleus. The enzyme catalyses L-seryl-[protein] + ATP = O-phospho-L-seryl-[protein] + ADP + H(+). It carries out the reaction L-threonyl-[protein] + ATP = O-phospho-L-threonyl-[protein] + ADP + H(+). Exhibits substrate-dependent heparin activation. Casein kinases are operationally defined by their preferential utilization of acidic proteins such as caseins as substrates. Central component of the circadian clock. May act as a negative regulator of circadian rhythmicity by phosphorylating per1 and per2, which may lead to their degradation. Participates in wnt signaling. The sequence is that of Casein kinase I isoform delta-B (csnk1db) from Danio rerio (Zebrafish).